A 377-amino-acid polypeptide reads, in one-letter code: Lipoyl synthase, mitochondrial (377 aa).

7 residues coordinate [4Fe-4S] cluster: C103, C108, C114, C134, C138, C141, and S349. The Radical SAM core domain maps to 119–338 (EHGTQTATIM…EERGNELGFL (220 aa)).

The protein belongs to the radical SAM superfamily. Lipoyl synthase family. [4Fe-4S] cluster serves as cofactor.

It is found in the mitochondrion. The enzyme catalyses [[Fe-S] cluster scaffold protein carrying a second [4Fe-4S](2+) cluster] + N(6)-octanoyl-L-lysyl-[protein] + 2 oxidized [2Fe-2S]-[ferredoxin] + 2 S-adenosyl-L-methionine + 4 H(+) = [[Fe-S] cluster scaffold protein] + N(6)-[(R)-dihydrolipoyl]-L-lysyl-[protein] + 4 Fe(3+) + 2 hydrogen sulfide + 2 5'-deoxyadenosine + 2 L-methionine + 2 reduced [2Fe-2S]-[ferredoxin]. It functions in the pathway protein modification; protein lipoylation via endogenous pathway; protein N(6)-(lipoyl)lysine from octanoyl-[acyl-carrier-protein]: step 2/2. In terms of biological role, catalyzes the radical-mediated insertion of two sulfur atoms into the C-6 and C-8 positions of the octanoyl moiety bound to the lipoyl domains of lipoate-dependent enzymes, thereby converting the octanoylated domains into lipoylated derivatives. The sequence is that of Lipoyl synthase, mitochondrial from Drosophila sechellia (Fruit fly).